Here is a 192-residue protein sequence, read N- to C-terminus: Phosphoheptose isomerase (192 aa).

An SIS domain is found at 35-192 (LIETLENQGK…CIERHFAHKN (158 aa)). 50–52 (NGG) serves as a coordination point for substrate. Zn(2+) is bound by residues His-59 and Glu-63. Residues Glu-63, 92-93 (ND), 118-120 (STS), Ser-123, and Gln-170 contribute to the substrate site. Zn(2+) is bound by residues Gln-170 and His-178.

This sequence belongs to the SIS family. GmhA subfamily. Homotetramer. The cofactor is Zn(2+).

Its subcellular location is the cytoplasm. It carries out the reaction 2 D-sedoheptulose 7-phosphate = D-glycero-alpha-D-manno-heptose 7-phosphate + D-glycero-beta-D-manno-heptose 7-phosphate. It functions in the pathway carbohydrate biosynthesis; D-glycero-D-manno-heptose 7-phosphate biosynthesis; D-glycero-alpha-D-manno-heptose 7-phosphate and D-glycero-beta-D-manno-heptose 7-phosphate from sedoheptulose 7-phosphate: step 1/1. The protein operates within bacterial outer membrane biogenesis; LPS core biosynthesis. Catalyzes the isomerization of sedoheptulose 7-phosphate in D-glycero-D-manno-heptose 7-phosphate. The polypeptide is Phosphoheptose isomerase (Helicobacter pylori (strain ATCC 700392 / 26695) (Campylobacter pylori)).